The chain runs to 338 residues: Acetoin:2,6-dichlorophenolindophenol oxidoreductase subunit beta (338 aa).

In terms of assembly, tetramer of 2 alpha and 2 beta subunits.

It participates in ketone degradation; acetoin degradation. Its function is as follows. Catalyzes the 2,6-dichlorophenolindophenol-dependent cleavage of acetoin into acetate and acetaldehyde, in vitro. The beta subunit is probably not the catalytic subunit of the enzyme. This chain is Acetoin:2,6-dichlorophenolindophenol oxidoreductase subunit beta (acoB), found in Cupriavidus necator (strain ATCC 17699 / DSM 428 / KCTC 22496 / NCIMB 10442 / H16 / Stanier 337) (Ralstonia eutropha).